A 206-amino-acid polypeptide reads, in one-letter code: MLPPAIHFYLLPLACILMKSCLAFKNDATEILYSHVVKPVPAHPSSNSTLNQARNGGRHFSNTGLDRNTRVQVGCRELRSTKYISDGQCTSISPLKELVCAGECLPLSVLPNWIGGGYGTKYWSRRSSQEWRCVNDKTRTQRIQLQCQDGSTRTYKITVVTACKCKRYTRQHNESSHNFESMSPAKPVQHHRERKRASKSSKHSMS.

The N-terminal stretch at M1 to A23 is a signal peptide. N-linked (GlcNAc...) asparagine glycosylation occurs at N47. 4 disulfide bridges follow: C75–C133, C89–C147, C100–C163, and C104–C165. Residues C75–R170 enclose the CTCK domain. N-linked (GlcNAc...) asparagine glycosylation occurs at N173. A disordered region spans residues S176–S206. Positions V188–S206 are enriched in basic residues.

It belongs to the sclerostin family. As to quaternary structure, interacts with BMP2, BMP4, BMP6 and BMP7 with high affinity.

The protein resides in the secreted. Functionally, directly antagonizes activity of BMP2, BMP4, BMP6 and BMP7 in a dose-dependent manner. Enhances Wnt signaling and inhibits TGF-beta signaling. May be involved in the onset of endometrial receptivity for implantation/sensitization for the decidual cell reaction. In Pongo abelii (Sumatran orangutan), this protein is Sclerostin domain-containing protein 1 (SOSTDC1).